A 191-amino-acid chain; its full sequence is PBAN-type neuropeptides (191 aa).

Residues 1 to 17 form the signal peptide; sequence MFSPLLFFAVSISCVLA. L44 bears the Leucine amide mark. Positions 48–91 are excised as a propeptide; that stretch reads SLRISTEDNRQAFFKLLEAADALKYYYDRLPYEMQADEPETRVT. A leucine amide mark is found at L100, L120, L156, and L166. A propeptide spanning residues 169–191 is cleaved from the precursor; sequence ELSYDMLPSKLRLVRSTNRTQST.

The protein belongs to the pyrokinin family. Expressed in the subesophageal ganglion.

Its subcellular location is the secreted. A hormone that controls sex pheromone production in females and pheromone responsiveness in male. The polypeptide is PBAN-type neuropeptides (Spodoptera littoralis (Egyptian cotton leafworm)).